Here is a 365-residue protein sequence, read N- to C-terminus: Carboxynorspermidine/carboxyspermidine decarboxylase (365 aa).

The residue at position 37 (Lys-37) is an N6-(pyridoxal phosphate)lysine. Substrate is bound by residues Glu-233 and Asp-269.

Belongs to the Orn/Lys/Arg decarboxylase class-II family. NspC subfamily. As to quaternary structure, homodimer. It depends on pyridoxal 5'-phosphate as a cofactor.

It localises to the cytoplasm. It catalyses the reaction carboxynorspermidine + H(+) = norspermidine + CO2. It carries out the reaction carboxyspermidine + H(+) = spermidine + CO2. In terms of biological role, catalyzes the decarboxylation of carboxynorspermidine and carboxyspermidine. The polypeptide is Carboxynorspermidine/carboxyspermidine decarboxylase (Herminiimonas arsenicoxydans).